A 228-amino-acid polypeptide reads, in one-letter code: Extracellular protease inhibitor 10 (228 aa).

Positions 1-22 are cleaved as a signal peptide; it reads MKSAFTLSLALVAVTATISAAA. Kazal-like domains follow at residues 23-72, 90-127, and 156-208; these read DDNC…ECAS, TSGTVGCPDMCLDVYDPVSDENGKEYSNQCYMEMAKCK, and GYQG…EGTL. N-linked (GlcNAc...) asparagine glycosylation occurs at N25. Intrachain disulfides connect C26/C56, C30/C49, and C38/C70. A disordered region spans residues 69–92; the sequence is ECASTPASSATPSPVTSSTGSTSG. Over residues 71–92 the composition is skewed to low complexity; sequence ASTPASSATPSPVTSSTGSTSG. 4 disulfides stabilise this stretch: C96–C126, C100–C119, C162–C193, and C167–C186. An N-linked (GlcNAc...) asparagine glycan is attached at N199.

In terms of assembly, interacts with host subtilisin-like protease P69B.

Its subcellular location is the secreted. Its function is as follows. Secreted effector that interacts with and inhibits the pathogenesis-related P69B subtilisin-like serine protease of host tomato. Inhibition of host proteases by a pathogen extracellular protease inhibitor forms a specific type of defense-counterdefense mechanism between plants and microbial pathogens. The chain is Extracellular protease inhibitor 10 from Phytophthora infestans (strain T30-4) (Potato late blight agent).